The primary structure comprises 131 residues: Increased copper sensitivity protein 3 (131 aa).

2 helical membrane-spanning segments follow: residues 35-55 (ISVL…IFFS) and 74-94 (IALT…IIAF).

The protein localises to the membrane. The polypeptide is Increased copper sensitivity protein 3 (ICS3) (Saccharomyces cerevisiae (strain ATCC 204508 / S288c) (Baker's yeast)).